The chain runs to 423 residues: MLLKNCRIIKDNKIIEGDILIDENGRIKKIAKDIKVDDEIIDIKNSLVIPGVIDAHVHFRWGEEKKEDFLSGSLAGINGGVCFAIDMPNNKPPITTKELFYKKLEDCKKDSKINVFLNFGVTENNYLGTVEDAKAYKIFMVKSVGDLFIEDYSKLKDILNQNKLFCIHAEHKDVINENLKKYQLNSWIDHCKIRDEKSEVEAVKEVIKNLKIIDRQSNKKPHVHFCHISTKEALYLIKKVRQELKNIKITVEVTPHHIYLNKDMAEELKGFGKFNPPLREKDDNIALIKGIVNKDVDIIASDHAPHLLEDKLKNVKNCPSGIPGIETIVPLTLNLVNKGLISLFDAIRVLSKNPAKIFNINNKIEEGNLANLTIIDLKKEGKINAELFKSKAKFSPFDGWEVKGFPIYTVINGTLYEAYGCKC.

Residues H56 and H58 each contribute to the Zn(2+) site. Substrate-binding positions include 58-60 and N89; that span reads HFR. Zn(2+)-binding residues include K137, H168, H227, and D302. K137 is subject to N6-carboxylysine. D302 is an active-site residue. H306 is a binding site for substrate.

Belongs to the metallo-dependent hydrolases superfamily. DHOase family. Class I DHOase subfamily. It depends on Zn(2+) as a cofactor.

The enzyme catalyses (S)-dihydroorotate + H2O = N-carbamoyl-L-aspartate + H(+). It functions in the pathway pyrimidine metabolism; UMP biosynthesis via de novo pathway; (S)-dihydroorotate from bicarbonate: step 3/3. Functionally, catalyzes the reversible cyclization of carbamoyl aspartate to dihydroorotate. This chain is Dihydroorotase, found in Methanocaldococcus jannaschii (strain ATCC 43067 / DSM 2661 / JAL-1 / JCM 10045 / NBRC 100440) (Methanococcus jannaschii).